A 72-amino-acid polypeptide reads, in one-letter code: Large ribosomal subunit protein uL29 (72 aa).

It belongs to the universal ribosomal protein uL29 family.

The protein is Large ribosomal subunit protein uL29 of Prochlorococcus marinus (strain AS9601).